Here is a 658-residue protein sequence, read N- to C-terminus: Protein teflon (658 aa).

The segment at 33 to 56 (LYCHFCRDLFTQLPEFLRHLQGAH) adopts a C2H2-type 1 zinc-finger fold. 2 disordered regions span residues 78–127 (EQDD…SEQK) and 151–175 (HINN…SESN). Over residues 100 to 111 (IPAKSEDSRAID) the composition is skewed to basic and acidic residues. Positions 118-127 (DNSPVKSEQK) are enriched in polar residues. The C2H2-type 2; degenerate zinc-finger motif lies at 608-630 (YFCKCCDDIFTLNEDYTRHLVSQ). The C2H2-type 3 zinc-finger motif lies at 634–657 (YQCTKCIKAFKYRGHFEKHLQNVH).

Belongs to the Teflon family.

Its subcellular location is the nucleus. The protein localises to the chromosome. In terms of biological role, specifically required in males for proper segregation of autosomal bivalents at meiosis I. Expression is required in the male germ line prior to spermatocyte stage S4. May have a role as a bridging molecule maintaining adhesion to hold autosome bivalents together via heterochromatic connections. This chain is Protein teflon, found in Drosophila erecta (Fruit fly).